Reading from the N-terminus, the 171-residue chain is MAAEEKDPLSYFAAYGSSSSSDSESSDEEKETENAKNRAAKRPFPTEAKKLPGPDELFRSVSRPAFLYNPLNKQIDWESRVKRAPEEPAKEFKIWKTNAVPPPESYQVAEKKAPPPELDMAIKWSNVYQDNGDDAPHANQAKCLPEEEAQEDSPPSDDEQEKAFATKKRKV.

Disordered stretches follow at residues 1 to 56 (MAAE…GPDE) and 126 to 171 (NVYQ…KRKV). Basic and acidic residues predominate over residues 47–56 (EAKKLPGPDE). The segment covering 146–160 (EEEAQEDSPPSDDEQ) has biased composition (acidic residues).

It belongs to the UPF0690 family.

The chain is UPF0690 protein C1orf52 homolog A from Xenopus laevis (African clawed frog).